We begin with the raw amino-acid sequence, 58 residues long: MSEIRVKENESLEQALRRFKRQCARAGVLSEVRKREHYEKPSVKRKKKSEAARKRKFK.

Residues 30–58 (SEVRKREHYEKPSVKRKKKSEAARKRKFK) form a disordered region. Positions 31–42 (EVRKREHYEKPS) are enriched in basic and acidic residues. Over residues 43 to 58 (VKRKKKSEAARKRKFK) the composition is skewed to basic residues.

The protein belongs to the bacterial ribosomal protein bS21 family.

The polypeptide is Small ribosomal subunit protein bS21 (Clostridium perfringens (strain ATCC 13124 / DSM 756 / JCM 1290 / NCIMB 6125 / NCTC 8237 / Type A)).